The sequence spans 484 residues: Ribosomal RNA small subunit methyltransferase F (484 aa).

Residues 126–132 (AAAPGSK), E150, D177, and D195 contribute to the S-adenosyl-L-methionine site. C248 functions as the Nucleophile in the catalytic mechanism.

This sequence belongs to the class I-like SAM-binding methyltransferase superfamily. RsmB/NOP family.

It is found in the cytoplasm. It catalyses the reaction cytidine(1407) in 16S rRNA + S-adenosyl-L-methionine = 5-methylcytidine(1407) in 16S rRNA + S-adenosyl-L-homocysteine + H(+). Functionally, specifically methylates the cytosine at position 1407 (m5C1407) of 16S rRNA. The protein is Ribosomal RNA small subunit methyltransferase F of Pectobacterium carotovorum subsp. carotovorum (strain PC1).